Here is a 366-residue protein sequence, read N- to C-terminus: RISC-loading complex subunit TARBP2 (366 aa).

Sufficient for interaction with PRKRA stretches follow at residues 22–105 (MLAA…EPAL), 152–234 (SPQQ…DARD), and 287–366 (LGAL…AGSK). The 68-residue stretch at 30 to 97 (TPISLLQEYG…AEVALKHLKG (68 aa)) folds into the DRBM 1 domain. Serine 152 carries the phosphoserine modification. 2 DRBM domains span residues 159-227 (NPVG…RVHT) and 293-361 (ACCR…YLKI). The sufficient for interaction with DICER1 stretch occupies residues 228–366 (VPLDARDGNE…QYLKIMAGSK (139 aa)).

This sequence belongs to the TARBP2 family. In terms of assembly, self-associates. Component of the RISC loading complex (RLC), or micro-RNA (miRNA) loading complex (miRLC), which is composed of DICER1, AGO2 and TARBP2. Note that the trimeric RLC/miRLC is also referred to as RISC. Interacts with EIF2AK2/PKR and inhibits its protein kinase activity. Interacts with DHX9 and PRKRA. Interacts with DICER1, AGO2, MOV10, EIF6 and RPL7A (60S ribosome subunit); they form a large RNA-induced silencing complex (RISC). Interacts with IRF7; this interaction prevents IRF7 phosphorylation and activation. (Microbial infection) Interacts with FTSJ3; forms a complex with FTSJ3 and HIV-1 TAR RNA. As to quaternary structure, (Microbial infection) Interacts with ebolavirus VP30; this interaction, which occurs only in the presence of siRNA, prevents TARBP2 binding to DICER1 and thus allows the virus to counteract host RNA silencing. In terms of assembly, (Microbial infection) Interacts with ebolavirus VP35; this interaction prevents TARBP2 binding to DICER1 and thus allows the virus to counteract host RNA silencing.

It is found in the cytoplasm. The protein resides in the perinuclear region. Its subcellular location is the nucleus. In terms of biological role, required for formation of the RNA induced silencing complex (RISC). Component of the RISC loading complex (RLC), also known as the micro-RNA (miRNA) loading complex (miRLC), which is composed of DICER1, AGO2 and TARBP2. Within the RLC/miRLC, DICER1 and TARBP2 are required to process precursor miRNAs (pre-miRNAs) to mature miRNAs and then load them onto AGO2. AGO2 bound to the mature miRNA constitutes the minimal RISC and may subsequently dissociate from DICER1 and TARBP2. May also play a role in the production of short interfering RNAs (siRNAs) from double-stranded RNA (dsRNA) by DICER1. Binds in vitro to the PRM1 3'-UTR. Seems to act as a repressor of translation. For some pre-miRNA substrates, may also alter the choice of cleavage site by DICER1. Negatively regulates IRF7-mediated IFN-beta signaling triggered by viral infection by inhibiting the phosphorylation of IRF7 and promoting its 'Lys'-48-linked ubiquitination and degradation. Its function is as follows. (Microbial infection) Binds to the HIV-1 TAR RNA which is located in the long terminal repeat (LTR) of HIV-1, and stimulates translation of TAR-containing RNAs. This is achieved in part at least by binding to and inhibiting EIF2AK2/PKR, thereby reducing phosphorylation and inhibition of EIF2S1/eIF-2-alpha. May also promote translation of TAR-containing RNAs independently of EIF2AK2/PKR. Mediates recruitment of FTSJ3 methyltransferase to HIV-1 RNA, leading to 2'-O-methylation of the viral genome, allowing HIV-1 to escape the innate immune system. This is RISC-loading complex subunit TARBP2 from Homo sapiens (Human).